The primary structure comprises 216 residues: Squamosa promoter-binding-like protein 13 (216 aa).

The interval 32 to 110 is disordered; that stretch reads GDGGAALPSP…PSGGGGGPRC (79 aa). Residues 67 to 91 show a composition bias toward low complexity; that stretch reads SSSAAVAAGASSSSSSSSVAAAARR. Positions 94-108 are enriched in gly residues; it reads GRAGGGAPSGGGGGP. The segment at 107 to 184 adopts an SBP-type zinc-finger fold; the sequence is GPRCQVERCG…AGHNERRRKS (78 aa). The Zn(2+) site is built by Cys-110, Cys-115, Cys-132, His-135, Cys-151, Cys-154, His-158, and Cys-170. Residues 167–183 carry the Bipartite nuclear localization signal motif; it reads KRSCRRRLAGHNERRRK. Positions 175 to 216 are disordered; the sequence is AGHNERRRKSAADTAHGENCRHADQDAGRSHQGTGNPPFQIR. Residues 189 to 203 show a composition bias toward basic and acidic residues; sequence AHGENCRHADQDAGR. The segment covering 205 to 216 has biased composition (polar residues); that stretch reads HQGTGNPPFQIR.

Ubiquitous.

The protein localises to the nucleus. Its function is as follows. Trans-acting factor that binds specifically to the consensus nucleotide sequence 5'-TNCGTACAA-3'. May be involved in panicle development. The protein is Squamosa promoter-binding-like protein 13 (SPL13) of Oryza sativa subsp. japonica (Rice).